Consider the following 382-residue polypeptide: DNA double-strand break repair protein Mre11 (382 aa).

Mn(2+) contacts are provided by Asp-8, His-10, Asp-49, and Asp-84. His-85 acts as the Proton donor in catalysis. Residues His-156, His-187, and His-189 each contribute to the Mn(2+) site.

This sequence belongs to the MRE11/RAD32 family. Homodimer. Forms a heterotetramer composed of two Mre11 subunits and two Rad50 subunits. Interacts with Rad50 and HerA. Mn(2+) is required as a cofactor.

With respect to regulation, nuclease activity is regulated by Rad50. Its function is as follows. Part of the Rad50/Mre11 complex, which is involved in the early steps of DNA double-strand break (DSB) repair. The complex may facilitate opening of the processed DNA ends to aid in the recruitment of HerA and NurA. Mre11 binds to DSB ends and has both double-stranded 3'-5' exonuclease activity and single-stranded endonuclease activity. Recruited immediately to chromosomal DNA after gamma irradiation, and remains DNA bound in the course of DNA repair. The polypeptide is DNA double-strand break repair protein Mre11 (Sulfolobus acidocaldarius (strain ATCC 33909 / DSM 639 / JCM 8929 / NBRC 15157 / NCIMB 11770)).